A 95-amino-acid chain; its full sequence is UPF0298 protein LVIS_1401 (95 aa).

The protein belongs to the UPF0298 family.

The protein localises to the cytoplasm. This Levilactobacillus brevis (strain ATCC 367 / BCRC 12310 / CIP 105137 / JCM 1170 / LMG 11437 / NCIMB 947 / NCTC 947) (Lactobacillus brevis) protein is UPF0298 protein LVIS_1401.